Reading from the N-terminus, the 512-residue chain is Phospho-2-dehydro-3-deoxyheptonate aldolase 2, chloroplastic (512 aa).

The N-terminal 57 residues, 1–57, are a transit peptide targeting the chloroplast; the sequence is MALTATATTRGGSALPNSCLQTPKFQSLQKPTFISSFPTNKKTKPRTKHISAVQSPP. Residues 37–57 are disordered; the sequence is FPTNKKTKPRTKHISAVQSPP. Mn(2+) is bound at residue Cys-126. Substrate-binding positions include Arg-165, 324 to 325, Lys-347, and Arg-378; that span reads ER. Mn(2+)-binding residues include His-410, Glu-452, and Asp-482.

The protein belongs to the class-II DAHP synthase family. Homodimer. Requires Mn(2+) as cofactor. As to expression, mostly expressed in leaves and stems, and, to a lower extent, in roots, stigmas, anthers, petal tubes, petal limbs and sepals.

It localises to the plastid. The protein localises to the chloroplast. The enzyme catalyses D-erythrose 4-phosphate + phosphoenolpyruvate + H2O = 7-phospho-2-dehydro-3-deoxy-D-arabino-heptonate + phosphate. It functions in the pathway metabolic intermediate biosynthesis; chorismate biosynthesis; chorismate from D-erythrose 4-phosphate and phosphoenolpyruvate: step 1/7. Involved in the production of volatile organic compounds (VOCs). Catalyzes an aldol-like condensation reaction between phosphoenolpyruvate (PEP) and D-erythrose 4-phosphate (E4P) to generate 3-deoxy-D-arabino-heptulosonate 7-phosphate (DAH7P) and inorganic phosphate. In Petunia hybrida (Petunia), this protein is Phospho-2-dehydro-3-deoxyheptonate aldolase 2, chloroplastic.